The chain runs to 158 residues: Transcription elongation factor GreA (158 aa).

It belongs to the GreA/GreB family.

In terms of biological role, necessary for efficient RNA polymerase transcription elongation past template-encoded arresting sites. The arresting sites in DNA have the property of trapping a certain fraction of elongating RNA polymerases that pass through, resulting in locked ternary complexes. Cleavage of the nascent transcript by cleavage factors such as GreA or GreB allows the resumption of elongation from the new 3'terminus. GreA releases sequences of 2 to 3 nucleotides. The protein is Transcription elongation factor GreA of Ralstonia nicotianae (strain ATCC BAA-1114 / GMI1000) (Ralstonia solanacearum).